Reading from the N-terminus, the 368-residue chain is tRNA(Met) cytidine acetate ligase (368 aa).

Residues 7-20 (IAEFNPFHNGHKYL), Gly-96, Asn-152, and Arg-175 contribute to the ATP site.

Belongs to the TmcAL family.

The protein localises to the cytoplasm. The catalysed reaction is cytidine(34) in elongator tRNA(Met) + acetate + ATP = N(4)-acetylcytidine(34) in elongator tRNA(Met) + AMP + diphosphate. Catalyzes the formation of N(4)-acetylcytidine (ac(4)C) at the wobble position of elongator tRNA(Met), using acetate and ATP as substrates. First activates an acetate ion to form acetyladenylate (Ac-AMP) and then transfers the acetyl group to tRNA to form ac(4)C34. The polypeptide is tRNA(Met) cytidine acetate ligase (Streptococcus pyogenes serotype M5 (strain Manfredo)).